Consider the following 653-residue polypeptide: Elongation factor 4 (653 aa).

Residues methionine 1 to glutamine 30 form a disordered region. One can recognise a tr-type G domain in the interval alanine 50–glutamine 231. GTP contacts are provided by residues aspartate 62–threonine 67 and asparagine 178–aspartate 181.

This sequence belongs to the TRAFAC class translation factor GTPase superfamily. Classic translation factor GTPase family. LepA subfamily.

Its subcellular location is the cell membrane. It catalyses the reaction GTP + H2O = GDP + phosphate + H(+). In terms of biological role, required for accurate and efficient protein synthesis under certain stress conditions. May act as a fidelity factor of the translation reaction, by catalyzing a one-codon backward translocation of tRNAs on improperly translocated ribosomes. Back-translocation proceeds from a post-translocation (POST) complex to a pre-translocation (PRE) complex, thus giving elongation factor G a second chance to translocate the tRNAs correctly. Binds to ribosomes in a GTP-dependent manner. In Mycobacterium bovis (strain ATCC BAA-935 / AF2122/97), this protein is Elongation factor 4.